The primary structure comprises 463 residues: ATP-dependent protease ATPase subunit HslU (463 aa).

ATP is bound by residues I19, 61–66, D277, E341, and R413; that span reads GVGKTE.

The protein belongs to the ClpX chaperone family. HslU subfamily. In terms of assembly, a double ring-shaped homohexamer of HslV is capped on each side by a ring-shaped HslU homohexamer. The assembly of the HslU/HslV complex is dependent on binding of ATP.

The protein localises to the cytoplasm. In terms of biological role, ATPase subunit of a proteasome-like degradation complex; this subunit has chaperone activity. The binding of ATP and its subsequent hydrolysis by HslU are essential for unfolding of protein substrates subsequently hydrolyzed by HslV. HslU recognizes the N-terminal part of its protein substrates and unfolds these before they are guided to HslV for hydrolysis. This Bacillus cereus (strain AH187) protein is ATP-dependent protease ATPase subunit HslU.